Consider the following 86-residue polypeptide: Large ribosomal subunit protein eL20 (86 aa).

Belongs to the eukaryotic ribosomal protein eL20 family. Part of the 50S ribosomal subunit. Binds 23S rRNA.

This is Large ribosomal subunit protein eL20 from Saccharolobus solfataricus (strain ATCC 35092 / DSM 1617 / JCM 11322 / P2) (Sulfolobus solfataricus).